We begin with the raw amino-acid sequence, 253 residues long: Chloride intracellular channel protein 4 (253 aa).

The residue at position 2 (Ala2) is an N-acetylalanine. The tract at residues 2–101 (ALSMPLNGLK…EEFLEEVLCP (100 aa)) is required for insertion into the membrane. At Ser4 the chain carries Phosphoserine. Lys24 is subject to N6-acetyllysine. A G-site motif is present at residues 35–38 (CPFS). The helical transmembrane segment at 37–57 (FSQRLFMILWLKGVVFSVTTV) threads the bilayer. The GST C-terminal domain maps to 81-244 (NSEVKTDVNK…PSDKEVEIAY (164 aa)). Lys130 is subject to N6-acetyllysine. Phosphoserine occurs at positions 132, 167, and 236. A Phosphotyrosine modification is found at Tyr244.

This sequence belongs to the chloride channel CLIC family. As to quaternary structure, monomer. Interacts with HRH3. Detected in brain, in cell bodies and dendrites of Purkinje cells in cerebellar neurons (at protein level). Expressed neonatal and adult cardiomyocytes (at protein level). Marked expression was found in hippocampus and cerebellum, and in many other tissues.

The protein resides in the cytoplasm. Its subcellular location is the cytoskeleton. It localises to the microtubule organizing center. The protein localises to the centrosome. It is found in the cytoplasmic vesicle membrane. The protein resides in the nucleus. Its subcellular location is the cell membrane. It localises to the mitochondrion. The protein localises to the cell junction. It is found in the endoplasmic reticulum membrane. It catalyses the reaction chloride(in) = chloride(out). It carries out the reaction thiocyanate(in) = thiocyanate(out). The enzyme catalyses nitrate(in) = nitrate(out). The catalysed reaction is iodide(out) = iodide(in). It catalyses the reaction bromide(in) = bromide(out). It carries out the reaction fluoride(in) = fluoride(out). The enzyme catalyses choline(out) = choline(in). Its activity is regulated as follows. Channel activity is redox- and pH-regulated. Anion vs cation selectivity is enhanced when fully oxidized. In the soluble state, catalyzes glutaredoxin-like thiol disulfide exchange reactions with reduced glutathione as electron donor. Can insert into membranes and form voltage-dependent multi-ion conductive channels. Membrane insertion seems to be redox-regulated and may occur only under oxidizing conditions. Has alternate cellular functions like a potential role in angiogenesis or in maintaining apical-basolateral membrane polarity during mitosis and cytokinesis. Could also promote endothelial cell proliferation and regulate endothelial morphogenesis (tubulogenesis). Promotes cell-surface expression of HRH3. In Rattus norvegicus (Rat), this protein is Chloride intracellular channel protein 4 (Clic4).